Here is a 464-residue protein sequence, read N- to C-terminus: ATP synthase subunit beta (464 aa).

148-155 serves as a coordination point for ATP; sequence GGAGVGKT.

Belongs to the ATPase alpha/beta chains family. F-type ATPases have 2 components, CF(1) - the catalytic core - and CF(0) - the membrane proton channel. CF(1) has five subunits: alpha(3), beta(3), gamma(1), delta(1), epsilon(1). CF(0) has three main subunits: a(1), b(2) and c(9-12). The alpha and beta chains form an alternating ring which encloses part of the gamma chain. CF(1) is attached to CF(0) by a central stalk formed by the gamma and epsilon chains, while a peripheral stalk is formed by the delta and b chains.

Its subcellular location is the cell inner membrane. The catalysed reaction is ATP + H2O + 4 H(+)(in) = ADP + phosphate + 5 H(+)(out). Produces ATP from ADP in the presence of a proton gradient across the membrane. The catalytic sites are hosted primarily by the beta subunits. This is ATP synthase subunit beta from Acinetobacter baylyi (strain ATCC 33305 / BD413 / ADP1).